The primary structure comprises 75 residues: Nigwaprin-a (75 aa).

A signal peptide spans 1 to 24 (MSSGGLLLLLGLLTLWAELTPVSG). The WAP domain maps to 27 to 72 (RPVKPGLCPPRPQKPPCVKECKNDWSCRGEQKCCRYGCIYECRDPI). Intrachain disulfides connect cysteine 34–cysteine 60, cysteine 43–cysteine 64, cysteine 47–cysteine 59, and cysteine 53–cysteine 68.

Belongs to the venom waprin family. In terms of tissue distribution, expressed by the venom gland.

Its subcellular location is the secreted. Its function is as follows. Damages membranes of susceptible bacteria. Has no hemolytic activity. Not toxic to mice. Does not inhibit the proteinases elastase and cathepsin G. The sequence is that of Nigwaprin-a from Cryptophis nigrescens (Eastern small-eyed snake).